A 536-amino-acid polypeptide reads, in one-letter code: Peptide chain release factor 3 (536 aa).

A tr-type G domain is found at serine 13–glutamine 281. Residues serine 22 to threonine 29, aspartate 90 to histidine 94, and asparagine 144 to aspartate 147 contribute to the GTP site.

This sequence belongs to the TRAFAC class translation factor GTPase superfamily. Classic translation factor GTPase family. PrfC subfamily.

It localises to the cytoplasm. Its function is as follows. Increases the formation of ribosomal termination complexes and stimulates activities of RF-1 and RF-2. It binds guanine nucleotides and has strong preference for UGA stop codons. It may interact directly with the ribosome. The stimulation of RF-1 and RF-2 is significantly reduced by GTP and GDP, but not by GMP. The protein is Peptide chain release factor 3 of Chromobacterium violaceum (strain ATCC 12472 / DSM 30191 / JCM 1249 / CCUG 213 / NBRC 12614 / NCIMB 9131 / NCTC 9757 / MK).